The primary structure comprises 275 residues: Light-independent protochlorophyllide reductase iron-sulfur ATP-binding protein (275 aa).

ATP is bound by residues 12-17 (GIGKST) and K41. S16 contacts Mg(2+). C97 and C131 together coordinate [4Fe-4S] cluster. 182 to 183 (NR) serves as a coordination point for ATP.

It belongs to the NifH/BchL/ChlL family. As to quaternary structure, homodimer. Protochlorophyllide reductase is composed of three subunits; BchL, BchN and BchB. The cofactor is [4Fe-4S] cluster.

It catalyses the reaction chlorophyllide a + oxidized 2[4Fe-4S]-[ferredoxin] + 2 ADP + 2 phosphate = protochlorophyllide a + reduced 2[4Fe-4S]-[ferredoxin] + 2 ATP + 2 H2O. Its pathway is porphyrin-containing compound metabolism; bacteriochlorophyll biosynthesis (light-independent). Functionally, component of the dark-operative protochlorophyllide reductase (DPOR) that uses Mg-ATP and reduced ferredoxin to reduce ring D of protochlorophyllide (Pchlide) to form chlorophyllide a (Chlide). This reaction is light-independent. The L component serves as a unique electron donor to the NB-component of the complex, and binds Mg-ATP. This Chlorobium phaeovibrioides (strain DSM 265 / 1930) (Prosthecochloris vibrioformis (strain DSM 265)) protein is Light-independent protochlorophyllide reductase iron-sulfur ATP-binding protein.